Here is a 348-residue protein sequence, read N- to C-terminus: GTPase Obg 1 (348 aa).

The Obg domain maps to 1-159 (MSFVDEAKIH…HCVLLKLKIV (159 aa)). Positions 160-329 (SDVGIIGMPN…LHAQVKKAVV (170 aa)) constitute an OBG-type G domain. Residues 166–173 (GMPNAGKS), 191–195 (FTTLE), 212–215 (DIPG), 279–282 (NKCD), and 310–312 (GDE) contribute to the GTP site. Positions 173 and 193 each coordinate Mg(2+).

This sequence belongs to the TRAFAC class OBG-HflX-like GTPase superfamily. OBG GTPase family. Monomer. The cofactor is Mg(2+).

The protein resides in the cytoplasm. Its function is as follows. An essential GTPase which binds GTP, GDP and possibly (p)ppGpp with moderate affinity, with high nucleotide exchange rates and a fairly low GTP hydrolysis rate. Plays a role in control of the cell cycle, stress response, ribosome biogenesis and in those bacteria that undergo differentiation, in morphogenesis control. In Anaplasma marginale (strain St. Maries), this protein is GTPase Obg 1.